Consider the following 444-residue polypeptide: UDP-N-acetylmuramoylalanine--D-glutamate ligase (444 aa).

109-115 (GSNGKTT) is an ATP binding site.

This sequence belongs to the MurCDEF family.

Its subcellular location is the cytoplasm. The catalysed reaction is UDP-N-acetyl-alpha-D-muramoyl-L-alanine + D-glutamate + ATP = UDP-N-acetyl-alpha-D-muramoyl-L-alanyl-D-glutamate + ADP + phosphate + H(+). It functions in the pathway cell wall biogenesis; peptidoglycan biosynthesis. Functionally, cell wall formation. Catalyzes the addition of glutamate to the nucleotide precursor UDP-N-acetylmuramoyl-L-alanine (UMA). In Bacteroides fragilis (strain ATCC 25285 / DSM 2151 / CCUG 4856 / JCM 11019 / LMG 10263 / NCTC 9343 / Onslow / VPI 2553 / EN-2), this protein is UDP-N-acetylmuramoylalanine--D-glutamate ligase.